A 508-amino-acid chain; its full sequence is 3-octaprenyl-4-hydroxybenzoate carboxy-lyase (508 aa).

Asn172 serves as a coordination point for Mn(2+). Residues 175–177, 189–191, and 194–195 contribute to the prenylated FMN site; these read IYR, RWL, and RG. Residue Glu238 coordinates Mn(2+). Asp287 serves as the catalytic Proton donor. Residues 483–508 form a disordered region; it reads GEYGIATPPPPPRHSPPSDERGHDDV. Basic and acidic residues predominate over residues 498–508; it reads PPSDERGHDDV.

The protein belongs to the UbiD family. As to quaternary structure, homohexamer. Prenylated FMN is required as a cofactor. Requires Mn(2+) as cofactor.

The protein resides in the cell membrane. It catalyses the reaction a 4-hydroxy-3-(all-trans-polyprenyl)benzoate + H(+) = a 2-(all-trans-polyprenyl)phenol + CO2. It participates in cofactor biosynthesis; ubiquinone biosynthesis. Its function is as follows. Catalyzes the decarboxylation of 3-octaprenyl-4-hydroxy benzoate to 2-octaprenylphenol, an intermediate step in ubiquinone biosynthesis. This chain is 3-octaprenyl-4-hydroxybenzoate carboxy-lyase, found in Chromohalobacter salexigens (strain ATCC BAA-138 / DSM 3043 / CIP 106854 / NCIMB 13768 / 1H11).